The chain runs to 324 residues: UDP-N-acetylenolpyruvoylglucosamine reductase (324 aa).

The FAD-binding PCMH-type domain occupies 39–220 (RTGGLAELFY…RAAMHEVALH (182 aa)). Arg-185 is a catalytic residue. The active-site Proton donor is the Ser-234. The active site involves Glu-304.

This sequence belongs to the MurB family. FAD is required as a cofactor.

The protein localises to the cytoplasm. The catalysed reaction is UDP-N-acetyl-alpha-D-muramate + NADP(+) = UDP-N-acetyl-3-O-(1-carboxyvinyl)-alpha-D-glucosamine + NADPH + H(+). Its pathway is cell wall biogenesis; peptidoglycan biosynthesis. Its function is as follows. Cell wall formation. The protein is UDP-N-acetylenolpyruvoylglucosamine reductase of Bartonella bacilliformis (strain ATCC 35685 / KC583 / Herrer 020/F12,63).